The sequence spans 187 residues: Elongation factor P (187 aa).

Belongs to the elongation factor P family.

The protein localises to the cytoplasm. It functions in the pathway protein biosynthesis; polypeptide chain elongation. Functionally, involved in peptide bond synthesis. Stimulates efficient translation and peptide-bond synthesis on native or reconstituted 70S ribosomes in vitro. Probably functions indirectly by altering the affinity of the ribosome for aminoacyl-tRNA, thus increasing their reactivity as acceptors for peptidyl transferase. The chain is Elongation factor P from Fusobacterium nucleatum subsp. nucleatum (strain ATCC 25586 / DSM 15643 / BCRC 10681 / CIP 101130 / JCM 8532 / KCTC 2640 / LMG 13131 / VPI 4355).